The following is a 178-amino-acid chain: Putative pre-16S rRNA nuclease (178 aa).

2 stretches are compositionally biased toward basic and acidic residues: residues 1 to 18 and 50 to 60; these read MDHAEQGPDRPGVDDPGR and PRSKDRGPDAP. 2 disordered regions span residues 1–23 and 36–60; these read MDHAEQGPDRPGVDDPGRGRRIG and SDPDGILATPVETVPRSKDRGPDAP.

It belongs to the YqgF nuclease family.

It is found in the cytoplasm. In terms of biological role, could be a nuclease involved in processing of the 5'-end of pre-16S rRNA. The sequence is that of Putative pre-16S rRNA nuclease from Rhodococcus opacus (strain B4).